The primary structure comprises 270 residues: Phthiotriol/phenolphthiotriol dimycocerosates methyltransferase (270 aa).

This sequence belongs to the methyltransferase superfamily. Phthiotriol/phenolphthiotriol dimycocerosates methyltransferase family.

Its function is as follows. Catalyzes the methylation of the lipid moiety of the intermediate compounds phthiotriol and glycosylated phenolphthiotriol dimycoserosates to form phthiocerol dimycocerosates (DIM A) and glycosylated phenolphthiocerol dimycocerosates (PGL). The chain is Phthiotriol/phenolphthiotriol dimycocerosates methyltransferase from Mycobacterium leprae (strain TN).